Consider the following 321-residue polypeptide: MAQNLYGPRVRIGNWNEDVYLEEEIMKDFLAKRDKGQLLIQRNRRLKENLLRPMQLSVSEDGYIHYGDKVMLVSPDHPETEADLFLPGDLSLCMTPDEIKAHLSNELEVPCGLSAAQTKIPVGRNTFTILCAAGEVIGQVLRYGQNFRLGITGGFDDRMLYLSSDHRTLLKSSKRSWLQEVFLTHEDSYLNCWQAAFPHPQLRLEYEGSPVPANTKILITHCHTNRGLVAHRHLFLRTYFGQEAEVAAHTYLDSHRVEKPKNHWMLVTGAPRKDLSTMLDLPKPPAEDTRALEQEREQVSDPGARSTPDARGCVPQCTLPM.

Residues 275–321 are disordered; it reads LSTMLDLPKPPAEDTRALEQEREQVSDPGARSTPDARGCVPQCTLPM. The span at 285-299 shows a compositional bias: basic and acidic residues; sequence PAEDTRALEQEREQV.

In terms of assembly, microtubule inner protein component of sperm flagellar doublet microtubules. Expressed in trachea multiciliated cells.

The protein localises to the cytoplasm. It is found in the cytoskeleton. Its subcellular location is the cilium axoneme. The protein resides in the flagellum axoneme. In terms of biological role, microtubule inner protein (MIP) part of the dynein-decorated doublet microtubules (DMTs) in cilia axoneme, which is required for motile cilia beating. In Bos taurus (Bovine), this protein is Cilia- and flagella-associated protein 161.